Reading from the N-terminus, the 82-residue chain is Proline, histidine and glycine-rich protein 1 (82 aa).

Residues 20–82 (HCGPPPGHGP…PGHPPPGPHH (63 aa)) are disordered.

This chain is Proline, histidine and glycine-rich protein 1 (PHGR1), found in Homo sapiens (Human).